Reading from the N-terminus, the 892-residue chain is Putative ubiquitin carboxyl-terminal hydrolase 11 (892 aa).

Residues 17 to 132 (YTPEEERRIV…GGPPVPRKLI (116 aa)) enclose the DUSP domain. Residues 69-89 (EPSEVTRPGPIDNHDIIDSES) form a disordered region. Residues 301–880 (GGLQNLGNTC…AAYVLFYQRV (580 aa)) enclose the USP domain. Cys-310 (nucleophile) is an active-site residue. Positions 636–660 (NSGNENGHVPDESSRSILSRDTETE) are disordered. The span at 643 to 657 (HVPDESSRSILSRDT) shows a compositional bias: basic and acidic residues. His-838 functions as the Proton acceptor in the catalytic mechanism.

It belongs to the peptidase C19 family.

It catalyses the reaction Thiol-dependent hydrolysis of ester, thioester, amide, peptide and isopeptide bonds formed by the C-terminal Gly of ubiquitin (a 76-residue protein attached to proteins as an intracellular targeting signal).. Functionally, recognizes and hydrolyzes the peptide bond at the C-terminal Gly of ubiquitin. Involved in the processing of poly-ubiquitin precursors as well as that of ubiquitinated proteins. In Arabidopsis thaliana (Mouse-ear cress), this protein is Putative ubiquitin carboxyl-terminal hydrolase 11 (UBP11).